The sequence spans 137 residues: Small heat shock protein IbpA (137 aa).

In terms of domain architecture, sHSP spans 28–137 (SQSNGGYPPY…ANKPRRIEIN (110 aa)).

The protein belongs to the small heat shock protein (HSP20) family. Monomer. Forms homomultimers of about 100-150 subunits at optimal growth temperatures. Conformation changes to monomers at high temperatures or high ionic concentrations.

It is found in the cytoplasm. Functionally, associates with aggregated proteins, together with IbpB, to stabilize and protect them from irreversible denaturation and extensive proteolysis during heat shock and oxidative stress. Aggregated proteins bound to the IbpAB complex are more efficiently refolded and reactivated by the ATP-dependent chaperone systems ClpB and DnaK/DnaJ/GrpE. Its activity is ATP-independent. The sequence is that of Small heat shock protein IbpA from Salmonella choleraesuis (strain SC-B67).